We begin with the raw amino-acid sequence, 103 residues long: Large ribosomal subunit protein bL21 (103 aa).

The protein belongs to the bacterial ribosomal protein bL21 family. Part of the 50S ribosomal subunit. Contacts protein L20.

This protein binds to 23S rRNA in the presence of protein L20. This chain is Large ribosomal subunit protein bL21, found in Serratia proteamaculans (strain 568).